We begin with the raw amino-acid sequence, 199 residues long: ATP-dependent Clp protease proteolytic subunit (199 aa).

Serine 99 acts as the Nucleophile in catalysis. Residue histidine 124 is part of the active site.

It belongs to the peptidase S14 family. As to quaternary structure, fourteen ClpP subunits assemble into 2 heptameric rings which stack back to back to give a disk-like structure with a central cavity, resembling the structure of eukaryotic proteasomes.

It is found in the cytoplasm. It carries out the reaction Hydrolysis of proteins to small peptides in the presence of ATP and magnesium. alpha-casein is the usual test substrate. In the absence of ATP, only oligopeptides shorter than five residues are hydrolyzed (such as succinyl-Leu-Tyr-|-NHMec, and Leu-Tyr-Leu-|-Tyr-Trp, in which cleavage of the -Tyr-|-Leu- and -Tyr-|-Trp bonds also occurs).. In terms of biological role, cleaves peptides in various proteins in a process that requires ATP hydrolysis. Has a chymotrypsin-like activity. Plays a major role in the degradation of misfolded proteins. The sequence is that of ATP-dependent Clp protease proteolytic subunit from Lactococcus lactis subsp. cremoris (strain SK11).